The following is a 1497-amino-acid chain: DNA-directed RNA polymerase subunit beta' (1497 aa).

4 residues coordinate Zn(2+): C67, C69, C82, and C85. Residues D499, D501, and D503 each contribute to the Mg(2+) site. Zn(2+)-binding residues include C867, C943, C950, and C953. The segment at 1476 to 1497 (ESNATERVVEEPATREGFANER) is disordered. Residues 1482–1497 (RVVEEPATREGFANER) show a composition bias toward basic and acidic residues.

Belongs to the RNA polymerase beta' chain family. The RNAP catalytic core consists of 2 alpha, 1 beta, 1 beta' and 1 omega subunit. When a sigma factor is associated with the core the holoenzyme is formed, which can initiate transcription. The cofactor is Mg(2+). Zn(2+) is required as a cofactor.

It catalyses the reaction RNA(n) + a ribonucleoside 5'-triphosphate = RNA(n+1) + diphosphate. Its function is as follows. DNA-dependent RNA polymerase catalyzes the transcription of DNA into RNA using the four ribonucleoside triphosphates as substrates. This chain is DNA-directed RNA polymerase subunit beta', found in Pelodictyon phaeoclathratiforme (strain DSM 5477 / BU-1).